The following is a 111-amino-acid chain: BET1-like protein (111 aa).

Residues Met1–Lys86 are Cytoplasmic-facing. Phosphoserine occurs at positions 9 and 37. The t-SNARE coiled-coil homology domain occupies Glu15–Met77. Residues Leu87–Ser107 form a helical; Anchor for type IV membrane protein membrane-spanning segment. Topologically, residues Arg108–Thr111 are lumenal.

Component of a SNARE complex consisting of STX5, YKT6, GOSR1 and BET1L. Interacts with STX5.

The protein resides in the golgi apparatus membrane. The protein localises to the golgi apparatus. It localises to the trans-Golgi network membrane. Its function is as follows. Vesicle SNARE required for targeting and fusion of retrograde transport vesicles with the Golgi complex. Required for the integrity of the Golgi complex. This is BET1-like protein from Bos taurus (Bovine).